We begin with the raw amino-acid sequence, 117 residues long: MACSAMTKLALVVALCMVVSVPIAQALTCGQVSSNLAPCIAYVRGGGAVPPACCNGIRNINNLAKTTADRQTACNCLKQLSASVPGVNANNAAALPGKCGVNVPYKISPSTNCATVK.

The N-terminal stretch at 1–26 is a signal peptide; the sequence is MACSAMTKLALVVALCMVVSVPIAQA. Intrachain disulfides connect cysteine 29–cysteine 76, cysteine 39–cysteine 53, cysteine 54–cysteine 99, and cysteine 74–cysteine 113.

This sequence belongs to the plant LTP family.

Its function is as follows. Plant non-specific lipid-transfer proteins transfer phospholipids as well as galactolipids across membranes. May play a role in wax or cutin deposition in the cell walls of expanding epidermal cells and certain secretory tissues. The chain is Non-specific lipid-transfer protein from Prunus avium (Cherry).